A 629-amino-acid polypeptide reads, in one-letter code: ATP-dependent DNA helicase II subunit 2 (629 aa).

A Ku domain is found at 254–476 (SGLNRKTAVE…GHQIDELMEQ (223 aa)). Positions 608 to 620 (DLETLLKRGEQHS) are enriched in basic and acidic residues. The interval 608–629 (DLETLLKRGEQHSRGSPNNSNN) is disordered.

This sequence belongs to the ku80 family. Heterodimer of YKU70/HDF1 and YKU80/HDF2. Interacts with SIR4.

Its subcellular location is the nucleus. The protein localises to the chromosome. It is found in the telomere. The enzyme catalyses ATP + H2O = ADP + phosphate + H(+). In terms of biological role, single-stranded DNA-dependent ATP-dependent helicase. Involved in non-homologous end joining (NHEJ) DNA double strand break repair. DNA-binding is sequence-independent but has a high affinity to nicks in double-stranded DNA and to the ends of duplex DNA. Binds to naturally occurring chromosomal ends, and therefore provides chromosomal end protection. Appears to have a role in recruitment of telomerase and CDC13 to the telomere and the subsequent telomere elongation. Required also for telomere recombination to repair telomeric ends in the absence of telomerase. KU70, of the KU70/KU80 heterodimer, binds to the stem loop of TLC1, the RNA component of telomerase. Involved in telomere maintenance. Interacts with telomeric repeats and subtelomeric sequences thereby controlling telomere length and protecting against subtelomeric rearrangement. Maintains telomeric chromatin, which is involved in silencing the expression of genes located at the telomere. Required for mating-type switching. This chain is ATP-dependent DNA helicase II subunit 2 (YKU80), found in Saccharomyces cerevisiae (strain ATCC 204508 / S288c) (Baker's yeast).